The following is a 217-amino-acid chain: Phosphatidylserine decarboxylase proenzyme (217 aa).

Serine 183 acts as the Schiff-base intermediate with substrate; via pyruvic acid in catalysis. Residue serine 183 is modified to Pyruvic acid (Ser); by autocatalysis.

It belongs to the phosphatidylserine decarboxylase family. PSD-A subfamily. In terms of assembly, heterodimer of a large membrane-associated beta subunit and a small pyruvoyl-containing alpha subunit. Requires pyruvate as cofactor. Post-translationally, is synthesized initially as an inactive proenzyme. Formation of the active enzyme involves a self-maturation process in which the active site pyruvoyl group is generated from an internal serine residue via an autocatalytic post-translational modification. Two non-identical subunits are generated from the proenzyme in this reaction, and the pyruvate is formed at the N-terminus of the alpha chain, which is derived from the carboxyl end of the proenzyme. The post-translation cleavage follows an unusual pathway, termed non-hydrolytic serinolysis, in which the side chain hydroxyl group of the serine supplies its oxygen atom to form the C-terminus of the beta chain, while the remainder of the serine residue undergoes an oxidative deamination to produce ammonia and the pyruvoyl prosthetic group on the alpha chain.

It is found in the cell membrane. The enzyme catalyses a 1,2-diacyl-sn-glycero-3-phospho-L-serine + H(+) = a 1,2-diacyl-sn-glycero-3-phosphoethanolamine + CO2. It participates in phospholipid metabolism; phosphatidylethanolamine biosynthesis; phosphatidylethanolamine from CDP-diacylglycerol: step 2/2. Its function is as follows. Catalyzes the formation of phosphatidylethanolamine (PtdEtn) from phosphatidylserine (PtdSer). In Cupriavidus metallidurans (strain ATCC 43123 / DSM 2839 / NBRC 102507 / CH34) (Ralstonia metallidurans), this protein is Phosphatidylserine decarboxylase proenzyme.